A 159-amino-acid polypeptide reads, in one-letter code: Globin C, coelomic (159 aa).

Residue Gly-2 is modified to N-acetylglycine. The Globin domain occupies Asp-12–Gly-158. The heme b site is built by His-74 and His-105.

The protein belongs to the globin family. In terms of assembly, monomer.

The chain is Globin C, coelomic from Molpadia arenicola (Sea cucumber).